The chain runs to 496 residues: Hemophilin secretion modulator (496 aa).

The first 19 residues, 1-19 (MKRTLLCCLTLLSCPFLYA), serve as a signal peptide directing secretion. A run of 14 beta stranded transmembrane segments spans residues 198-208 (WQGSVSAGYTY), 253-263 (DYEASLIKRYA), 268-277 (HGVALRALAF), 291-301 (TININAGYSYF), 305-315 (NQIGVSPLFEH), 327-337 (WGARAEWMHFI), 341-351 (KAFKLEAESKD), 365-374 (SSAFATFWKI), 380-389 (TFFGGLDVLD), 403-413 (QGVRLGLSKSW), 418-427 (NTTLLSSYRW), 446-455 (QNHTFVVQMP), 462-472 (MTPNLTYRYNH), and 486-495 (HNISFKLEHR).

It belongs to the Slam family.

The protein localises to the cell outer membrane. Functionally, part of a high affinity heme acquisition system. Mediates the secretion of the hemophilin HphA across the outer membrane into the extracellular environment. Plays a supporting role for full virulence. This Acinetobacter baumannii protein is Hemophilin secretion modulator.